The following is a 96-amino-acid chain: Probable Fe(2+)-trafficking protein (96 aa).

The tract at residues 21–40 is disordered; that stretch reads LPKMPHPPFPNKKGQELQET.

The protein belongs to the Fe(2+)-trafficking protein family.

Its function is as follows. Could be a mediator in iron transactions between iron acquisition and iron-requiring processes, such as synthesis and/or repair of Fe-S clusters in biosynthetic enzymes. This Psychrobacter arcticus (strain DSM 17307 / VKM B-2377 / 273-4) protein is Probable Fe(2+)-trafficking protein.